A 92-amino-acid polypeptide reads, in one-letter code: Small ribosomal subunit protein uS19 (92 aa).

Residues 72–92 (GEFSPTRTYTGHGSDKKSKRG) form a disordered region.

The protein belongs to the universal ribosomal protein uS19 family.

Protein S19 forms a complex with S13 that binds strongly to the 16S ribosomal RNA. The sequence is that of Small ribosomal subunit protein uS19 from Gluconobacter oxydans (strain 621H) (Gluconobacter suboxydans).